A 137-amino-acid chain; its full sequence is Large-conductance mechanosensitive channel (137 aa).

2 consecutive transmembrane segments (helical) span residues 15–35 (VDLA…TSLV) and 81–101 (GKFI…FFVI).

This sequence belongs to the MscL family. In terms of assembly, homopentamer.

It localises to the cell inner membrane. Its function is as follows. Channel that opens in response to stretch forces in the membrane lipid bilayer. May participate in the regulation of osmotic pressure changes within the cell. The polypeptide is Large-conductance mechanosensitive channel (Hyphomonas neptunium (strain ATCC 15444)).